A 193-amino-acid chain; its full sequence is Xanthine phosphoribosyltransferase (193 aa).

Residues Leu-20 and Thr-27 each coordinate xanthine. 5-phospho-alpha-D-ribose 1-diphosphate is bound at residue 128-132 (ANGQA). Lys-156 provides a ligand contact to xanthine.

This sequence belongs to the purine/pyrimidine phosphoribosyltransferase family. Xpt subfamily. As to quaternary structure, homodimer.

The protein localises to the cytoplasm. It carries out the reaction XMP + diphosphate = xanthine + 5-phospho-alpha-D-ribose 1-diphosphate. The protein operates within purine metabolism; XMP biosynthesis via salvage pathway; XMP from xanthine: step 1/1. Functionally, converts the preformed base xanthine, a product of nucleic acid breakdown, to xanthosine 5'-monophosphate (XMP), so it can be reused for RNA or DNA synthesis. This Streptococcus pyogenes serotype M3 (strain ATCC BAA-595 / MGAS315) protein is Xanthine phosphoribosyltransferase.